The sequence spans 141 residues: Galactose-6-phosphate isomerase subunit LacA 1 (141 aa).

The protein belongs to the LacAB/RpiB family. As to quaternary structure, heteromultimeric protein consisting of LacA and LacB.

It catalyses the reaction aldehydo-D-galactose 6-phosphate = keto-D-tagatose 6-phosphate. Its pathway is carbohydrate metabolism; D-galactose 6-phosphate degradation; D-tagatose 6-phosphate from D-galactose 6-phosphate: step 1/1. This Streptococcus pyogenes serotype M18 (strain MGAS8232) protein is Galactose-6-phosphate isomerase subunit LacA 1.